The primary structure comprises 128 residues: Small ribosomal subunit protein eS6 (128 aa).

This sequence belongs to the eukaryotic ribosomal protein eS6 family.

This Thermoplasma volcanium (strain ATCC 51530 / DSM 4299 / JCM 9571 / NBRC 15438 / GSS1) protein is Small ribosomal subunit protein eS6.